The sequence spans 500 residues: ATP synthase subunit alpha (500 aa).

Position 169–176 (169–176 (GDRQTGKT)) interacts with ATP.

It belongs to the ATPase alpha/beta chains family. In terms of assembly, F-type ATPases have 2 components, CF(1) - the catalytic core - and CF(0) - the membrane proton channel. CF(1) has five subunits: alpha(3), beta(3), gamma(1), delta(1), epsilon(1). CF(0) has three main subunits: a(1), b(2) and c(9-12). The alpha and beta chains form an alternating ring which encloses part of the gamma chain. CF(1) is attached to CF(0) by a central stalk formed by the gamma and epsilon chains, while a peripheral stalk is formed by the delta and b chains.

It localises to the cell inner membrane. It carries out the reaction ATP + H2O + 4 H(+)(in) = ADP + phosphate + 5 H(+)(out). Its function is as follows. Produces ATP from ADP in the presence of a proton gradient across the membrane. The alpha chain is a regulatory subunit. In Fusobacterium nucleatum subsp. nucleatum (strain ATCC 25586 / DSM 15643 / BCRC 10681 / CIP 101130 / JCM 8532 / KCTC 2640 / LMG 13131 / VPI 4355), this protein is ATP synthase subunit alpha.